A 779-amino-acid polypeptide reads, in one-letter code: Endonuclease MutS2 (779 aa).

328-335 contacts ATP; sequence GPNTGGKT. A Smr domain is found at 704–779; sequence LDLRGKRYEE…GSGATIVTLG (76 aa).

Belongs to the DNA mismatch repair MutS family. MutS2 subfamily. Homodimer. Binds to stalled ribosomes, contacting rRNA.

In terms of biological role, endonuclease that is involved in the suppression of homologous recombination and thus may have a key role in the control of bacterial genetic diversity. Acts as a ribosome collision sensor, splitting the ribosome into its 2 subunits. Detects stalled/collided 70S ribosomes which it binds and splits by an ATP-hydrolysis driven conformational change. Acts upstream of the ribosome quality control system (RQC), a ribosome-associated complex that mediates the extraction of incompletely synthesized nascent chains from stalled ribosomes and their subsequent degradation. Probably generates substrates for RQC. In Streptococcus pyogenes serotype M5 (strain Manfredo), this protein is Endonuclease MutS2.